The sequence spans 91 residues: Ice-structuring protein (91 aa).

The first 21 residues, 1–21, serve as a signal peptide directing secretion; it reads MALSLFTVGQLIFLFWTMRIT. A propeptide spans 22–39 (removed by a dipeptidylpeptidase); sequence EANPDPAAKAVPAAAAPD.

This sequence belongs to the type-I AFP family.

The protein localises to the secreted. Contributes to protect fish blood from freezing at subzero sea water temperatures. Lowers the blood freezing point. Binds to nascent ice crystals and prevents further growth. The sequence is that of Ice-structuring protein from Pseudopleuronectes americanus (Winter flounder).